A 132-amino-acid polypeptide reads, in one-letter code: uncharacterized protein (132 aa).

This is an uncharacterized protein from Escherichia coli.